The sequence spans 116 residues: Large ribosomal subunit protein uL23 (116 aa).

The protein belongs to the universal ribosomal protein uL23 family. Part of the 50S ribosomal subunit. Contacts protein L29, and trigger factor when it is bound to the ribosome.

One of the early assembly proteins it binds 23S rRNA. One of the proteins that surrounds the polypeptide exit tunnel on the outside of the ribosome. Forms the main docking site for trigger factor binding to the ribosome. The polypeptide is Large ribosomal subunit protein uL23 (Psychrobacter sp. (strain PRwf-1)).